Consider the following 625-residue polypeptide: Beta-galactosidase large subunit (625 aa).

Glu465 functions as the Proton donor in the catalytic mechanism. The active-site Nucleophile is the Glu533.

The protein belongs to the glycosyl hydrolase 2 family. In terms of assembly, heterodimer of a large (LacL) and a small subunit (LacM).

It carries out the reaction Hydrolysis of terminal non-reducing beta-D-galactose residues in beta-D-galactosides.. Functionally, component of a beta-galactosidase. This chain is Beta-galactosidase large subunit, found in Latilactobacillus sakei (Lactobacillus sakei).